We begin with the raw amino-acid sequence, 306 residues long: Acetyl-coenzyme A carboxylase carboxyl transferase subunit beta (306 aa).

The CoA carboxyltransferase N-terminal domain occupies 25 to 294 (LWIKDPTSGE…VFNPSDPSPT (270 aa)). A disordered region spans residues 286 to 306 (FNPSDPSPTDSQTSLSTTKAA). The segment covering 288 to 306 (PSDPSPTDSQTSLSTTKAA) has biased composition (low complexity).

The protein belongs to the AccD/PCCB family. As to quaternary structure, acetyl-CoA carboxylase is a heterohexamer composed of biotin carboxyl carrier protein (AccB), biotin carboxylase (AccC) and two subunits each of ACCase subunit alpha (AccA) and ACCase subunit beta (AccD).

The protein resides in the cytoplasm. It catalyses the reaction N(6)-carboxybiotinyl-L-lysyl-[protein] + acetyl-CoA = N(6)-biotinyl-L-lysyl-[protein] + malonyl-CoA. The protein operates within lipid metabolism; malonyl-CoA biosynthesis; malonyl-CoA from acetyl-CoA: step 1/1. Component of the acetyl coenzyme A carboxylase (ACC) complex. Biotin carboxylase (BC) catalyzes the carboxylation of biotin on its carrier protein (BCCP) and then the CO(2) group is transferred by the transcarboxylase to acetyl-CoA to form malonyl-CoA. In Bartonella grahamii (strain as4aup), this protein is Acetyl-coenzyme A carboxylase carboxyl transferase subunit beta.